We begin with the raw amino-acid sequence, 101 residues long: Isochorismate pyruvate lyase (101 aa).

One can recognise a Chorismate mutase domain in the interval proline 4–tryptophan 94. Arginine 14, arginine 31, lysine 42, and glutamine 90 together coordinate substrate.

As to quaternary structure, dimer of dimers.

It carries out the reaction isochorismate = salicylate + pyruvate. It catalyses the reaction chorismate = prephenate. It participates in siderophore biosynthesis; salicylate biosynthesis. With respect to regulation, inhibited by endo-oxabicyclic diacid resembling to the conformation of the transition state. Its function is as follows. Involved in the incorporation of salicylate into the siderophore pyochelin. Catalyzes the elimination of the enolpyruvyl side chain from isochorismate to yield salicylate and pyruvate via a rare pericyclic hydrogen transfer mechanism from C2 to C5. PchB also catalyzes the nonphysiological Claisen rearrangement of chorismate to prephenate in which the pyruvylenol tail is transferred from a C3 ether linkage to a C1-C9 linkage. This is Isochorismate pyruvate lyase from Pseudomonas aeruginosa (strain ATCC 15692 / DSM 22644 / CIP 104116 / JCM 14847 / LMG 12228 / 1C / PRS 101 / PAO1).